We begin with the raw amino-acid sequence, 38 residues long: Large ribosomal subunit protein bL36 (38 aa).

The protein belongs to the bacterial ribosomal protein bL36 family.

This Buchnera aphidicola subsp. Baizongia pistaciae (strain Bp) protein is Large ribosomal subunit protein bL36.